The chain runs to 633 residues: Pentatricopeptide repeat-containing protein At3g24000, mitochondrial (633 aa).

The transit peptide at 1 to 63 (MALRFPPRLL…SYIPADRRFY (63 aa)) directs the protein to the mitochondrion. 10 PPR repeats span residues 94–124 (DIVMGNTLLNMYAKCGSLEEARKVFEKMPQR), 125–159 (DFVTWTTLISGYSQHDRPCDALLFFNQMLRFGYSP), 160–194 (NEFTLSSVIKAAAAERRGCCGHQLHGFCVKCGFDS), 195–225 (NVHVGSALLDLYTRYGLMDDAQLVFDALESR), 226–260 (NDVSWNALIAGHARRSGTEKALELFQGMLRDGFRP), 261–295 (SHFSYASLFGACSSTGFLEQGKWVHAYMIKSGEKL), 296–326 (VAFAGNTLLDMYAKSGSIHDARKIFDRLAKR), 327–361 (DVVSWNSLLTAYAQHGFGKEAVWWFEEMRRVGIRP), 362–396 (NEISFLSVLTACSHSGLLDEGWHYYELMKKDGIVP), and 397–431 (EAWHYVTVVDLLGRAGDLNRALRFIEEMPIEPTAA). Residues 432 to 507 (IWKALLNACR…EPACSWVEIE (76 aa)) form a type E motif region. Residues 508–538 (NAIHMFVANDERHPQREEIARKWEEVLAKIK) are type E(+) motif. Residues 539–633 (ELGYVPDTSH…DGNCSCKDYW (95 aa)) form a type DYW motif region.

Belongs to the PPR family. PCMP-H subfamily.

The protein resides in the mitochondrion. The protein is Pentatricopeptide repeat-containing protein At3g24000, mitochondrial (PCMP-H87) of Arabidopsis thaliana (Mouse-ear cress).